The sequence spans 235 residues: REF/SRPP-like protein At2g47780 (235 aa).

Residues M1 to Q12 show a composition bias toward acidic residues. Residues M1–V32 form a disordered region.

This sequence belongs to the REF/SRPP family.

The polypeptide is REF/SRPP-like protein At2g47780 (Arabidopsis thaliana (Mouse-ear cress)).